We begin with the raw amino-acid sequence, 254 residues long: Large ribosomal subunit protein uL2 (254 aa).

The protein belongs to the universal ribosomal protein uL2 family. In terms of assembly, component of the large ribosomal subunit. Mature ribosomes consist of a small (40S) and a large (60S) subunit. The 40S subunit contains about 32 different proteins and 1 molecule of RNA (18S). The 60S subunit contains 45 different proteins and 3 molecules of RNA (25S, 5.8S and 5S).

The protein localises to the cytoplasm. Component of the ribosome, a large ribonucleoprotein complex responsible for the synthesis of proteins in the cell. The small ribosomal subunit (SSU) binds messenger RNAs (mRNAs) and translates the encoded message by selecting cognate aminoacyl-transfer RNA (tRNA) molecules. The large subunit (LSU) contains the ribosomal catalytic site termed the peptidyl transferase center (PTC), which catalyzes the formation of peptide bonds, thereby polymerizing the amino acids delivered by tRNAs into a polypeptide chain. The nascent polypeptides leave the ribosome through a tunnel in the LSU and interact with protein factors that function in enzymatic processing, targeting, and the membrane insertion of nascent chains at the exit of the ribosomal tunnel. In Candida albicans (strain SC5314 / ATCC MYA-2876) (Yeast), this protein is Large ribosomal subunit protein uL2.